The primary structure comprises 396 residues: Smad nuclear-interacting protein 1 (396 aa).

Basic and acidic residues predominate over residues 1-10 (MKAVKSERER). Positions 1 to 227 (MKAVKSERER…VPAKEKPSFE (227 aa)) are disordered. A Glycyl lysine isopeptide (Lys-Gly) (interchain with G-Cter in SUMO); alternate cross-link involves residue lysine 30. A Glycyl lysine isopeptide (Lys-Gly) (interchain with G-Cter in SUMO1); alternate cross-link involves residue lysine 30. Lysine 30 participates in a covalent cross-link: Glycyl lysine isopeptide (Lys-Gly) (interchain with G-Cter in SUMO2); alternate. A phosphoserine mark is found at serine 35, serine 49, serine 52, and serine 54. At threonine 57 the chain carries Phosphothreonine. Serine 58 and serine 99 each carry phosphoserine. A compositionally biased stretch (basic residues) spans 77–105 (PPKKKNKASGRRSKSPRSKRNRSPHHSTV). Residues 107-142 (VKQEREDHPRRGREDRQHREPSEQEHRRARNSDRDR) show a composition bias toward basic and acidic residues. Lysine 108 participates in a covalent cross-link: Glycyl lysine isopeptide (Lys-Gly) (interchain with G-Cter in SUMO2). The residue at position 153 (serine 153) is a Phosphoserine. Residues 165 to 196 (RDRDTQNLQAQEEEREFYNARRREHRQRNDVG) are a coiled coil. At serine 202 the chain carries Phosphoserine. Residues 213-225 (NKEKEVPAKEKPS) show a composition bias toward basic and acidic residues. Residue lysine 223 forms a Glycyl lysine isopeptide (Lys-Gly) (interchain with G-Cter in SUMO2) linkage. One can recognise an FHA domain in the interval 281–344 (YLLGRHRRIA…NGTFLNNKRI (64 aa)). Residues 373–382 (SSDTSEIDRK) show a composition bias toward basic and acidic residues. The segment at 373-396 (SSDTSEIDRKDDEDEEEEEEVSDS) is disordered. Acidic residues predominate over residues 383 to 396 (DDEDEEEEEEVSDS). Residue serine 394 is modified to Phosphoserine.

Component of activated spliceosome complexes. Component of the minor spliceosome, which splices U12-type introns. Binds SMAD4 and CREBBP/EP300. Binds the SMAD1/OAZ1/PSMB4 complex. Interacts with DROSHA and SMARCA4. Component of the SNARP complex which consists at least of SNIP1, SNW1, THRAP3, BCLAF1 and PNN. In terms of processing, degraded by the proteasome upon binding to the SMAD1/OAZ1/PSMB4 complex. As to expression, ubiquitous, with highest expression in heart and skeletal muscle.

Its subcellular location is the nucleus. In terms of biological role, required for pre-mRNA splicing as component of the spliceosome. As a component of the minor spliceosome, involved in the splicing of U12-type introns in pre-mRNAs. Down-regulates NF-kappa-B signaling by competing with RELA for CREBBP/EP300 binding. Involved in the microRNA (miRNA) biogenesis. May be involved in cyclin-D1/CCND1 mRNA stability through the SNARP complex which associates with both the 3'end of the CCND1 gene and its mRNA. This Homo sapiens (Human) protein is Smad nuclear-interacting protein 1 (SNIP1).